The primary structure comprises 891 residues: MAAAAALWQPQEEGLREICTLLDAHISPNSDQARIWQQLQHYSQFPDFNNYLVFLLARGEGKSFEARQAAGLLLKNNLRATFSSMPPASQQYVKSELLPCIGATNKAIRSTVGTVISVLFQIVRVAGWIELFQALHQCLDSNDLDHMEGAMDAIYKICEDVPEELDVDVPGLPERPINVFMPRLLQFFQSTHAILRKLALGCINQYIVVMPAALYMSMDQYLQGLFNLAKDPSADVRKLVCSAWVQLIEVRPSILEPHLKNVTELMLQANKDSDDEVALEACEFWSAYCDVSMPPEGLREFLPRLIPTLLSNMSYSDDDESLADAEEDESFPDRDQDLKPRFHASRLHGSETGEDDDDDDAVNVWNLRKCSAAGLDVLSNVFGDDILPTLMPLIQQNLARTDDDAWKEREAAVLSIGAIAEGCITGLYPHLPQIVAFLIPLLDDKFPLIRSITCWTLSRYSKFIVQSLEHPNGREQFDKILLGLLRRVLDTNKRVQEAACSAFATLEEEAAEELVPHLGIILQHLMCAYGKYQRRNLRILYDALGTLADAVGAELNQAKYLDIFMPPLITKWQQLANSDKDLFPLLECFTSIAQALGPGFSQFAEPVFQRCINLIQSQHLAKVDPAAAGALYDKEFIVCALDLLSGLAEGLGAGIESLVSQSSLRDILLQCCMDEAADVRQSALALLGDLSRVCPIHLHPRLQEFLNVAAKQLNPQCVKEAVSVANNACWAIGELAIKIGKEISPVVITVVSCLVPILKSPEGLNKSLLENSAITLGRLCWVCPDIVAPHMDHFMQAWCNALCMIRDDFEKEDAFHGLCAMVAANPTGAVGSLTFICQACASWNEIKSEGLHNEVCQILNGYKQMLGSGGWEQCMSTLEPAVVQRLGRYGV.

HEAT repeat units lie at residues 14–40 (GLRE…QQLQ), 45–83 (FPDF…ATFS), 92–125 (YVKS…IVRV), 131–168 (LFQA…LDVD), 178–208 (NVFM…QYIV), 221–248 (YLQG…VQLI), 260–287 (KNVT…FWSA), 303–381 (PRLI…LSNV), 389–420 (TLMP…GAIA), 432–459 (PQIV…TLSR), 477–510 (FDKI…EEEA), 518–551 (LGII…ADAV), 559–597 (KYLD…QALG), 605–653 (EPVF…GLGA), 664–695 (LRDI…RVCP), 703–740 (QEFL…IKIG), 748–784 (ITVV…WVCP), 792–825 (DHFM…VAAN), and 834–866 (TFIC…KQML). In terms of domain architecture, Importin N-terminal spans 35-103 (IWQQLQHYSQ…KSELLPCIGA (69 aa)). Residues 317-330 (DDDESLADAEEDES) show a composition bias toward acidic residues. The interval 317–337 (DDDESLADAEEDESFPDRDQD) is disordered.

The protein belongs to the importin beta family. Importin beta-2 subfamily.

The protein resides in the cytoplasm. It is found in the nucleus. Its subcellular location is the nucleoplasm. Functions in nuclear protein import as nuclear transport receptor. Serves as receptor for nuclear localization signals (NLS) in cargo substrates. Is thought to mediate docking of the importin/substrate complex to the nuclear pore complex (NPC) through binding to nucleoporin and the complex is subsequently translocated through the pore by an energy requiring, Ran-dependent mechanism. At the nucleoplasmic side of the NPC, Ran binds to the importin, the importin/substrate complex dissociates and importin is re-exported from the nucleus to the cytoplasm where GTP hydrolysis releases Ran. The directionality of nuclear import is thought to be conferred by an asymmetric distribution of the GTP- and GDP-bound forms of Ran between the cytoplasm and nucleus. The sequence is that of Transportin-1 (TRN1) from Oryza sativa subsp. japonica (Rice).